Reading from the N-terminus, the 411-residue chain is MATINDNYLKLKAGYLFPEIARRVNAFAQSNPEAAIIRLGIGDVTEPLPVACRQAMIQAVEDMGQRENFKGYGPEQGYAWLREKIAAHDFQSRGCEVDASEIFISDGSKCDCGNILDIFGNNNRIAVTDPVYPVYVDTNVMAGHTGDANDRGEYDGLVYLPISAENNFTAEIPSEKVDLIYLCFPNNPTGAVASREYLQAWVDYARANGAIILFDAAYEAFITDPAIPHSIFEIPGARDCAIEFRSFSKNAGFTGTRCAFTVVPKGLKGKAADGSEVELWGLWNRRQSTKFNGVSYIVQRGAEAVYSAEGQAQIKELVAFYLENARIIREELTAAGLDVHGGVNAPYVWVKTPAGLTSWDFFDKLLQVCNVVGTPGSGFGAAGEGYFRISAFNSRENVVTAMQRIRSAGLA.

2 residues coordinate substrate: Tyr-15 and Gly-42. Pyridoxal 5'-phosphate contacts are provided by residues Tyr-72, 108 to 109 (SK), Tyr-132, Asn-187, Tyr-218, and 246 to 248 (SFS). The substrate site is built by Lys-109, Tyr-132, and Asn-187. N6-(pyridoxal phosphate)lysine is present on Lys-249. 2 residues coordinate pyridoxal 5'-phosphate: Arg-257 and Asn-292. 2 residues coordinate substrate: Asn-292 and Arg-388.

It belongs to the class-I pyridoxal-phosphate-dependent aminotransferase family. LL-diaminopimelate aminotransferase subfamily. In terms of assembly, homodimer. Requires pyridoxal 5'-phosphate as cofactor.

The enzyme catalyses (2S,6S)-2,6-diaminopimelate + 2-oxoglutarate = (S)-2,3,4,5-tetrahydrodipicolinate + L-glutamate + H2O + H(+). The protein operates within amino-acid biosynthesis; L-lysine biosynthesis via DAP pathway; LL-2,6-diaminopimelate from (S)-tetrahydrodipicolinate (aminotransferase route): step 1/1. Its function is as follows. Involved in the synthesis of meso-diaminopimelate (m-DAP or DL-DAP), required for both lysine and peptidoglycan biosynthesis. Catalyzes the direct conversion of tetrahydrodipicolinate to LL-diaminopimelate. This chain is LL-diaminopimelate aminotransferase, found in Synechococcus elongatus (strain ATCC 33912 / PCC 7942 / FACHB-805) (Anacystis nidulans R2).